We begin with the raw amino-acid sequence, 87 residues long: UPF0147 protein AF_2370.1 (87 aa).

This sequence belongs to the UPF0147 family.

The polypeptide is UPF0147 protein AF_2370.1 (Archaeoglobus fulgidus (strain ATCC 49558 / DSM 4304 / JCM 9628 / NBRC 100126 / VC-16)).